A 261-amino-acid polypeptide reads, in one-letter code: Cytochrome c oxidase subunit 3 (261 aa).

Residues 1-15 are Mitochondrial matrix-facing; sequence MTHQTHAYHMVDPSP. The chain crosses the membrane as a helical span at residues 16–34; the sequence is WPLTGALSALLMTSGLTMW. At 35-40 the chain is on the mitochondrial intermembrane side; sequence FHYHSV. A helical transmembrane segment spans residues 41–66; that stretch reads TLLLLGLTTNILTMFQWWRDVVREGT. The Mitochondrial matrix segment spans residues 67–72; the sequence is FQGHHT. Residues 73-105 form a helical membrane-spanning segment; sequence PVVQESLRYGMILFITSEVLFFTGFFWAFYHSS. Residues 106–128 are Mitochondrial intermembrane-facing; it reads LAPTPELGSYWPPVGVYPLNPLE. The chain crosses the membrane as a helical span at residues 129 to 152; the sequence is VPLLNTSVLLASGVTITWAHHSLM. Over 153–155 the chain is Mitochondrial matrix; the sequence is EGN. A helical membrane pass occupies residues 156-183; it reads RKNMLQALLITILLGVYFTLLQMFEYYE. Topologically, residues 184-190 are mitochondrial intermembrane; that stretch reads ASFTISD. Residues 191–223 form a helical membrane-spanning segment; sequence GIYGSTFFVTTGFHGLHVIIGSTFLLTCFIRQL. The Mitochondrial matrix portion of the chain corresponds to 224-232; that stretch reads KFHFTSNHH. A helical transmembrane segment spans residues 233-256; sequence FGFEAAAWYWHFVDVVWLFLYLSI. Residues 257 to 261 are Mitochondrial intermembrane-facing; that stretch reads YWWGS.

This sequence belongs to the cytochrome c oxidase subunit 3 family. Component of the cytochrome c oxidase (complex IV, CIV), a multisubunit enzyme composed of 14 subunits. The complex is composed of a catalytic core of 3 subunits MT-CO1, MT-CO2 and MT-CO3, encoded in the mitochondrial DNA, and 11 supernumerary subunits COX4I, COX5A, COX5B, COX6A, COX6B, COX6C, COX7A, COX7B, COX7C, COX8 and NDUFA4, which are encoded in the nuclear genome. The complex exists as a monomer or a dimer and forms supercomplexes (SCs) in the inner mitochondrial membrane with NADH-ubiquinone oxidoreductase (complex I, CI) and ubiquinol-cytochrome c oxidoreductase (cytochrome b-c1 complex, complex III, CIII), resulting in different assemblies (supercomplex SCI(1)III(2)IV(1) and megacomplex MCI(2)III(2)IV(2)).

The protein localises to the mitochondrion inner membrane. The enzyme catalyses 4 Fe(II)-[cytochrome c] + O2 + 8 H(+)(in) = 4 Fe(III)-[cytochrome c] + 2 H2O + 4 H(+)(out). In terms of biological role, component of the cytochrome c oxidase, the last enzyme in the mitochondrial electron transport chain which drives oxidative phosphorylation. The respiratory chain contains 3 multisubunit complexes succinate dehydrogenase (complex II, CII), ubiquinol-cytochrome c oxidoreductase (cytochrome b-c1 complex, complex III, CIII) and cytochrome c oxidase (complex IV, CIV), that cooperate to transfer electrons derived from NADH and succinate to molecular oxygen, creating an electrochemical gradient over the inner membrane that drives transmembrane transport and the ATP synthase. Cytochrome c oxidase is the component of the respiratory chain that catalyzes the reduction of oxygen to water. Electrons originating from reduced cytochrome c in the intermembrane space (IMS) are transferred via the dinuclear copper A center (CU(A)) of subunit 2 and heme A of subunit 1 to the active site in subunit 1, a binuclear center (BNC) formed by heme A3 and copper B (CU(B)). The BNC reduces molecular oxygen to 2 water molecules using 4 electrons from cytochrome c in the IMS and 4 protons from the mitochondrial matrix. The chain is Cytochrome c oxidase subunit 3 (MT-CO3) from Loxodonta africana (African elephant).